The primary structure comprises 459 residues: ATP synthase subunit beta (459 aa).

149 to 156 contributes to the ATP binding site; that stretch reads GGAGVGKT.

The protein belongs to the ATPase alpha/beta chains family. F-type ATPases have 2 components, CF(1) - the catalytic core - and CF(0) - the membrane proton channel. CF(1) has five subunits: alpha(3), beta(3), gamma(1), delta(1), epsilon(1). CF(0) has three main subunits: a(1), b(2) and c(9-12). The alpha and beta chains form an alternating ring which encloses part of the gamma chain. CF(1) is attached to CF(0) by a central stalk formed by the gamma and epsilon chains, while a peripheral stalk is formed by the delta and b chains.

It localises to the cell inner membrane. The catalysed reaction is ATP + H2O + 4 H(+)(in) = ADP + phosphate + 5 H(+)(out). Functionally, produces ATP from ADP in the presence of a proton gradient across the membrane. The catalytic sites are hosted primarily by the beta subunits. The sequence is that of ATP synthase subunit beta from Pseudomonas syringae pv. syringae (strain B728a).